The chain runs to 24 residues: Lantibiotic 107891 (24 aa).

(E)-2,3-didehydrobutyrine is present on T2. Positions 3–7 form a cross-link, lanthionine (Ser-Cys); that stretch reads SWSLC. 6'-chlorotryptophan is present on W4. Position 5 is a 2,3-didehydroalanine (Ser) (S5). Residues 8–11 constitute a cross-link (beta-methyllanthionine (Thr-Cys)); the sequence is TPGC. 2 consecutive cross-links (lanthionine (Ser-Cys)) follow at residues 13–20 and 18–23; these read SPGGGSNC and SNCSFC. At P14 the chain carries 3,4-dihydroxyproline; in form A1. The residue at position 14 (P14) is a 4-hydroxyproline; in form A2. The segment at residues 21-24 is a cross-link (S-(2-aminovinyl)-D-cysteine (Ser-Cys)); sequence SFCC.

Belongs to the type A lantibiotic family. Maturation of lantibiotics involves the enzymatic conversion of Thr, and Ser into dehydrated AA and the formation of thioether bonds with cysteine. The C-terminal lanthionine undergoes decarboxylation. This is followed by membrane translocation and cleavage of the modified precursor. In terms of processing, occurs in 2 forms, A1 contains 3,4-dihydroxyproline at Pro-14, A2 contains 4-hydroxyproline at Pro-14. The patent report does not provide the stereochemistry of the modified prolines. Post-translationally, the patent report does not describe whether the 2,3-didehydrobutyrine is the E- or Z-isomer. In several diagrams it is shown as the E-isomer.

Functionally, lanthionine-containing peptide antibiotic (lantibiotic) active on Gram-positive bacteria. The bactericidal activity of lantibiotics is based on depolarization of energized bacterial cytoplasmic membranes, initiated by the formation of aqueous transmembrane pores. This chain is Lantibiotic 107891, found in Microbispora sp. (strain 107891).